A 234-amino-acid chain; its full sequence is Zein-alpha 19B1 (234 aa).

The signal sequence occupies residues 1–21 (MAAKIFCLLMLLGLSASAATA).

The protein belongs to the zein family.

Zeins are major seed storage proteins. The polypeptide is Zein-alpha 19B1 (Zea mays (Maize)).